Reading from the N-terminus, the 433-residue chain is GTPase Obg (433 aa).

An Obg domain is found at 1–159 (MKFVDSADLI…FEIRAELKVL (159 aa)). Residues 160–332 (ADVGFVGLPN…LLFMIYEELK (173 aa)) enclose the OBG-type G domain. Residues 166–173 (GLPNAGKS), 191–195 (FTTIN), 213–216 (DLPG), 284–287 (NKMD), and 313–315 (SGL) contribute to the GTP site. Residues serine 173 and threonine 193 each coordinate Mg(2+). Positions 355 to 433 (KFEEQKEDIQ…VFDYELEWTD (79 aa)) constitute an OCT domain.

It belongs to the TRAFAC class OBG-HflX-like GTPase superfamily. OBG GTPase family. As to quaternary structure, monomer. It depends on Mg(2+) as a cofactor.

It localises to the cytoplasm. Its function is as follows. An essential GTPase which binds GTP, GDP and possibly (p)ppGpp with moderate affinity, with high nucleotide exchange rates and a fairly low GTP hydrolysis rate. Plays a role in control of the cell cycle, stress response, ribosome biogenesis and in those bacteria that undergo differentiation, in morphogenesis control. The protein is GTPase Obg of Mycoplasma capricolum subsp. capricolum (strain California kid / ATCC 27343 / NCTC 10154).